Here is a 244-residue protein sequence, read N- to C-terminus: Biosynthetic peptidoglycan transglycosylase (244 aa).

The chain crosses the membrane as a helical span at residues 23 to 43 (LVVIGAWLAGILLFSFLPVPF).

This sequence belongs to the glycosyltransferase 51 family.

It localises to the cell inner membrane. It carries out the reaction [GlcNAc-(1-&gt;4)-Mur2Ac(oyl-L-Ala-gamma-D-Glu-L-Lys-D-Ala-D-Ala)](n)-di-trans,octa-cis-undecaprenyl diphosphate + beta-D-GlcNAc-(1-&gt;4)-Mur2Ac(oyl-L-Ala-gamma-D-Glu-L-Lys-D-Ala-D-Ala)-di-trans,octa-cis-undecaprenyl diphosphate = [GlcNAc-(1-&gt;4)-Mur2Ac(oyl-L-Ala-gamma-D-Glu-L-Lys-D-Ala-D-Ala)](n+1)-di-trans,octa-cis-undecaprenyl diphosphate + di-trans,octa-cis-undecaprenyl diphosphate + H(+). It functions in the pathway cell wall biogenesis; peptidoglycan biosynthesis. Functionally, peptidoglycan polymerase that catalyzes glycan chain elongation from lipid-linked precursors. This is Biosynthetic peptidoglycan transglycosylase from Pectobacterium carotovorum subsp. carotovorum (strain PC1).